We begin with the raw amino-acid sequence, 248 residues long: 3-deoxy-manno-octulosonate cytidylyltransferase (248 aa).

It belongs to the KdsB family.

Its subcellular location is the cytoplasm. The enzyme catalyses 3-deoxy-alpha-D-manno-oct-2-ulosonate + CTP = CMP-3-deoxy-beta-D-manno-octulosonate + diphosphate. The protein operates within nucleotide-sugar biosynthesis; CMP-3-deoxy-D-manno-octulosonate biosynthesis; CMP-3-deoxy-D-manno-octulosonate from 3-deoxy-D-manno-octulosonate and CTP: step 1/1. Its pathway is bacterial outer membrane biogenesis; lipopolysaccharide biosynthesis. Functionally, activates KDO (a required 8-carbon sugar) for incorporation into bacterial lipopolysaccharide in Gram-negative bacteria. This is 3-deoxy-manno-octulosonate cytidylyltransferase from Chlorobium chlorochromatii (strain CaD3).